Consider the following 451-residue polypeptide: uncharacterized protein (451 aa).

Positions 29–204 (LERYPDIIVF…TSMTFKAVPI (176 aa)) constitute an FAD-binding PCMH-type domain. Pros-8alpha-FAD histidine is present on H66.

Belongs to the oxygen-dependent FAD-linked oxidoreductase family. FAD is required as a cofactor.

This is an uncharacterized protein from Bacillus subtilis (strain 168).